The primary structure comprises 240 residues: Small ribosomal subunit protein uS2 (240 aa).

The protein belongs to the universal ribosomal protein uS2 family.

This chain is Small ribosomal subunit protein uS2 (rpsB), found in Pasteurella multocida (strain Pm70).